The sequence spans 654 residues: Pyoverdine export ATP-binding/permease protein PvdT (654 aa).

The ABC transporter domain maps to 6–245 (IELCDIRKAY…AHKGIQAEEL (240 aa)). Residue 43-50 (GASGSGKS) coordinates ATP. Helical transmembrane passes span 282-302 (ALTL…LAVG), 529-549 (LSLM…IGVM), 584-604 (AIML…VVGA), and 614-634 (AFAL…GVVF).

It belongs to the ABC transporter superfamily. Macrolide exporter (TC 3.A.1.122) family. In terms of assembly, part of the tripartite efflux system PvdRT-OpmQ, which is composed of an inner membrane component with both ATPase and permease domains, PvdT, a periplasmic membrane fusion protein, PvdR, and an outer membrane component, OpmQ.

It localises to the cell inner membrane. With respect to regulation, has a basal ATPase activity that is stimulated by PvdR. In vitro, interaction with PVD influences the affinity of PvdT to PvdR. In terms of biological role, part of the tripartite efflux system PvdRT-OpmQ required for the secretion into the extracellular milieu of the siderophore pyoverdine (PVD), which is involved in iron acquisition. This subunit binds PVD and drives its secretion by hydrolyzing ATP. The system is responsible for export of newly synthesized PVD after the final steps of biosynthesis have taken place in the periplasm. It is also responsible for recycling of PVD after internalization of ferri-PVD into the periplasm by the outer-membrane receptor FpvA and release of iron from PVD, thus making PVD available for new cycles of iron uptake. Contributes to resistance against ampicillin. In Pseudomonas putida (strain ATCC 47054 / DSM 6125 / CFBP 8728 / NCIMB 11950 / KT2440), this protein is Pyoverdine export ATP-binding/permease protein PvdT.